Reading from the N-terminus, the 255-residue chain is F-box/SPRY domain-containing protein 1 (255 aa).

The F-box domain occupies 3 to 51 (DPVAALCNYNVLEVIFSYLELEDLNHCSQVCKSWYHFLNDENSDVWRWH). The region spanning 61–253 (LKSDLLASVS…VSMVYLGTPL (193 aa)) is the B30.2/SPRY domain.

The protein belongs to the FBXO45/Fsn family. As to quaternary structure, component of an E3 ubiquitin ligase complex composed of hiw and Fsn.

Its subcellular location is the synapse. It functions in the pathway protein modification; protein ubiquitination. Required in the presynaptic motoneuron to down-regulate the levels of wnd and restrain synaptic terminal growth at the neuromuscular junction (NMJ). In Drosophila yakuba (Fruit fly), this protein is F-box/SPRY domain-containing protein 1.